The following is a 66-amino-acid chain: Large ribosomal subunit protein uL29 (66 aa).

The protein belongs to the universal ribosomal protein uL29 family.

In Brucella abortus (strain S19), this protein is Large ribosomal subunit protein uL29.